Reading from the N-terminus, the 777-residue chain is Ethylene receptor 4 (777 aa).

A run of 3 helical transmembrane segments spans residues 49–69, 77–97, and 113–133; these read LLIA…ATCA, AVLH…LAAF, and AAKV…LTFI. Cu cation contacts are provided by Cys88 and His92. The region spanning 184-344 is the GAF domain; that stretch reads DAHAILRTTA…VVADQAAVAL (161 aa). The region spanning 387–521 is the Histidine kinase domain; it reads AMCHAMRRPV…NTESGACRLS (135 aa). His390 carries the post-translational modification Phosphohistidine; by autocatalysis. Residues 645 to 774 form the Response regulatory domain; it reads RVLLADDDAM…ALGAQLCRVL (130 aa). 4-aspartylphosphate is present on Asp696.

It belongs to the ethylene receptor family. The cofactor is Cu cation.

It is found in the endoplasmic reticulum membrane. It carries out the reaction ATP + protein L-histidine = ADP + protein N-phospho-L-histidine.. In terms of biological role, ethylene receptor related to bacterial two-component regulators. Acts as a redundant negative regulator of ethylene signaling. The sequence is that of Ethylene receptor 4 from Oryza sativa subsp. indica (Rice).